The following is a 264-amino-acid chain: Methylthioribulose-1-phosphate dehydratase (264 aa).

Cys-110 provides a ligand contact to substrate. Residues His-128 and His-130 each coordinate Zn(2+). Glu-151 functions as the Proton donor/acceptor in the catalytic mechanism. His-213 is a binding site for Zn(2+).

Belongs to the aldolase class II family. MtnB subfamily. Requires Zn(2+) as cofactor.

The protein resides in the cytoplasm. It catalyses the reaction 5-(methylsulfanyl)-D-ribulose 1-phosphate = 5-methylsulfanyl-2,3-dioxopentyl phosphate + H2O. It functions in the pathway amino-acid biosynthesis; L-methionine biosynthesis via salvage pathway; L-methionine from S-methyl-5-thio-alpha-D-ribose 1-phosphate: step 2/6. Its function is as follows. Catalyzes the dehydration of methylthioribulose-1-phosphate (MTRu-1-P) into 2,3-diketo-5-methylthiopentyl-1-phosphate (DK-MTP-1-P). The protein is Methylthioribulose-1-phosphate dehydratase of Vanderwaltozyma polyspora (strain ATCC 22028 / DSM 70294 / BCRC 21397 / CBS 2163 / NBRC 10782 / NRRL Y-8283 / UCD 57-17) (Kluyveromyces polysporus).